The chain runs to 69 residues: Light-harvesting polypeptide B-800/860 alpha chain (69 aa).

Topologically, residues 1–14 (MTNGKIWLVVKPTV) are cytoplasmic. A helical membrane pass occupies residues 15–35 (GLPIGMLFAALLAVLIHGLLF). Position 31 (histidine 31) interacts with a bacteriochlorophyll. Residues 36 to 69 (VDGRLKSWWSEFPVAKPAVVSVQAAPAPVAAEVK) are Periplasmic-facing.

Belongs to the antenna complex alpha subunit family. As to quaternary structure, the core complex is formed by different alpha and beta chains, binding bacteriochlorophyll molecules, and arranged most probably in tetrameric structures disposed around the reaction center. The non-pigmented gamma chains may constitute additional components.

Its subcellular location is the cell inner membrane. Functionally, antenna complexes are light-harvesting systems, which transfer the excitation energy to the reaction centers. This chain is Light-harvesting polypeptide B-800/860 alpha chain, found in Rhodocyclus tenuis (Rhodospirillum tenue).